Consider the following 280-residue polypeptide: Ribosomal RNA-processing protein 7 homolog A (280 aa).

Residues 1–10 show a composition bias toward basic residues; sequence MVSRRKKRKA. Positions 1–24 are disordered; the sequence is MVSRRKKRKAGGHEESIPSPPGYS. The region spanning 59–159 is the RRM domain; sequence RTLFILNVPP…SGIHKWISDY (101 aa). The residue at position 99 (S99) is a Phosphoserine.

It belongs to the RRP7 family. Part of the small subunit (SSU) processome, composed of more than 70 proteins and the RNA chaperone small nucleolar RNA (snoRNA) U3. Interacts with NOL6; required for NOL6 localization to nucleolus.

It localises to the nucleus. The protein localises to the nucleolus. The protein resides in the cell projection. Its subcellular location is the cilium. It is found in the cytoplasm. It localises to the cytoskeleton. The protein localises to the microtubule organizing center. The protein resides in the centrosome. In terms of biological role, nucleolar protein that is involved in ribosomal RNA (rRNA) processing. Also plays a role in primary cilia resorption, and cell cycle progression in neurogenesis and neocortex development. Part of the small subunit (SSU) processome, first precursor of the small eukaryotic ribosomal subunit. During the assembly of the SSU processome in the nucleolus, many ribosome biogenesis factors, an RNA chaperone and ribosomal proteins associate with the nascent pre-rRNA and work in concert to generate RNA folding, modifications, rearrangements and cleavage as well as targeted degradation of pre-ribosomal RNA by the RNA exosome. The polypeptide is Ribosomal RNA-processing protein 7 homolog A (Rrp7a) (Mus musculus (Mouse)).